Reading from the N-terminus, the 290-residue chain is Shikimate dehydrogenase (NADP(+)) (290 aa).

Residues 22 to 24 (SLS) and Thr68 each bind shikimate. Lys72 functions as the Proton acceptor in the catalytic mechanism. Residues Asn93 and Asp108 each contribute to the shikimate site. NADP(+)-binding positions include 133-137 (GSGGS) and Ile228. Position 230 (Tyr230) interacts with shikimate. Gly251 contacts NADP(+).

Belongs to the shikimate dehydrogenase family. As to quaternary structure, homodimer.

The enzyme catalyses shikimate + NADP(+) = 3-dehydroshikimate + NADPH + H(+). It functions in the pathway metabolic intermediate biosynthesis; chorismate biosynthesis; chorismate from D-erythrose 4-phosphate and phosphoenolpyruvate: step 4/7. Its function is as follows. Involved in the biosynthesis of the chorismate, which leads to the biosynthesis of aromatic amino acids. Catalyzes the reversible NADPH linked reduction of 3-dehydroshikimate (DHSA) to yield shikimate (SA). This Leptospira borgpetersenii serovar Hardjo-bovis (strain JB197) protein is Shikimate dehydrogenase (NADP(+)).